Consider the following 198-residue polypeptide: Recombination protein RecR (198 aa).

The segment at 57–72 (CSICGNLTDDDPCHIC) adopts a C4-type zinc-finger fold. In terms of domain architecture, Toprim spans 80–175 (TTILVVEDAK…KVTRLARGLA (96 aa)).

The protein belongs to the RecR family.

Its function is as follows. May play a role in DNA repair. It seems to be involved in an RecBC-independent recombinational process of DNA repair. It may act with RecF and RecO. The protein is Recombination protein RecR of Streptococcus pyogenes serotype M5 (strain Manfredo).